The following is a 355-amino-acid chain: MKTDPNKEKALNAVLSQIEKQFGKGSIMKLGEDRSMDVETISTGSLSLDVALGAGGLPMGRIVEIYGPESSGKTTLTLEVIAAAQKQGKTCAFIDAEHALDPIYAKKLGVDIDNLLCSQPDTGEQALEICDALTRSGAVDVIVVDSVAALTPKAEIEGEIGDSHMGLAARMMSQAMRKLAGNLKQSNTLLIFINQIRMKIGVMFGNPETTTGGNALKFYASVRLDIRRTGAIKDREEVIGNETRVKVVKNKIAAPFKQAEFQILYGQGINSTGELVDLGVQHKLIEKSGAWYAYKGNKIGQGRANAGKYLIENPEVSDEIETTLRAMLLGNGEKIAPDAADTAGDNVDLETGEVF.

67–74 (GPESSGKT) lines the ATP pocket.

The protein belongs to the RecA family.

The protein resides in the cytoplasm. In terms of biological role, can catalyze the hydrolysis of ATP in the presence of single-stranded DNA, the ATP-dependent uptake of single-stranded DNA by duplex DNA, and the ATP-dependent hybridization of homologous single-stranded DNAs. It interacts with LexA causing its activation and leading to its autocatalytic cleavage. The chain is Protein RecA from Shewanella halifaxensis (strain HAW-EB4).